The chain runs to 355 residues: Tryptophan--tRNA ligase (355 aa).

ATP contacts are provided by residues 13–15 and 21–22; these read QPT and GN. Positions 14–22 match the 'HIGH' region motif; sequence PTGNLHLGN. Position 137 (D137) interacts with L-tryptophan. ATP-binding positions include 149-151, I208, and 217-221; these read GED and KMSKS. Residues 217 to 221 carry the 'KMSKS' region motif; sequence KMSKS.

It belongs to the class-I aminoacyl-tRNA synthetase family. Homodimer.

It is found in the cytoplasm. The enzyme catalyses tRNA(Trp) + L-tryptophan + ATP = L-tryptophyl-tRNA(Trp) + AMP + diphosphate + H(+). In terms of biological role, catalyzes the attachment of tryptophan to tRNA(Trp). The protein is Tryptophan--tRNA ligase of Mesorhizobium japonicum (strain LMG 29417 / CECT 9101 / MAFF 303099) (Mesorhizobium loti (strain MAFF 303099)).